A 29-amino-acid polypeptide reads, in one-letter code: Prolamin alpha-1 (29 aa).

This chain is Prolamin alpha-1, found in Dactylis glomerata (Orchard grass).